The sequence spans 520 residues: Probable cytochrome P450 6v1 (520 aa).

Cys465 lines the heme pocket.

It belongs to the cytochrome P450 family. Heme serves as cofactor.

The protein localises to the endoplasmic reticulum membrane. The protein resides in the microsome membrane. Its function is as follows. May be involved in the metabolism of insect hormones and in the breakdown of synthetic insecticides. The chain is Probable cytochrome P450 6v1 (Cyp6v1) from Drosophila melanogaster (Fruit fly).